A 109-amino-acid chain; its full sequence is Cell division suppressor protein YneA (109 aa).

The region spanning 39–90 (SEVNVSEGDSLWALADQYAGKSDMAKADFVSWVEKENNLADGHVEAGESVVI) is the LysM domain.

The protein belongs to the YneA family.

Its subcellular location is the cytoplasm. Functionally, inhibits cell division during the SOS response. Affects a later stage of the cell division protein assembly, after the assembly of the Z ring, by probably suppressing recruitment of FtsL and/or DivIC to the division machinery. In Listeria monocytogenes serotype 4b (strain F2365), this protein is Cell division suppressor protein YneA.